The chain runs to 124 residues: Glycine cleavage system H protein (124 aa).

In terms of domain architecture, Lipoyl-binding spans 22-104 (TATVGITDFA…YGDGWMIEIE (83 aa)). K63 bears the N6-lipoyllysine mark.

It belongs to the GcvH family. As to quaternary structure, the glycine cleavage system is composed of four proteins: P, T, L and H. (R)-lipoate is required as a cofactor.

In terms of biological role, the glycine cleavage system catalyzes the degradation of glycine. The H protein shuttles the methylamine group of glycine from the P protein to the T protein. The polypeptide is Glycine cleavage system H protein (Salinibacter ruber (strain DSM 13855 / M31)).